The primary structure comprises 782 residues: Phosphoribosylformylglycinamidine synthase subunit PurL (782 aa).

The active site involves histidine 50. Residues tyrosine 53 and lysine 92 each coordinate ATP. Glutamate 94 contacts Mg(2+). Substrate-binding positions include 95-98 (SHNH) and arginine 117. Histidine 96 (proton acceptor) is an active-site residue. Residue aspartate 118 participates in Mg(2+) binding. Glutamine 241 is a binding site for substrate. Aspartate 269 contacts Mg(2+). Residue 313 to 315 (ESQ) participates in substrate binding. ATP-binding residues include aspartate 520 and glycine 557. Asparagine 558 lines the Mg(2+) pocket. Residue serine 560 participates in substrate binding.

It belongs to the FGAMS family. As to quaternary structure, monomer. Part of the FGAM synthase complex composed of 1 PurL, 1 PurQ and 2 PurS subunits.

Its subcellular location is the cytoplasm. It carries out the reaction N(2)-formyl-N(1)-(5-phospho-beta-D-ribosyl)glycinamide + L-glutamine + ATP + H2O = 2-formamido-N(1)-(5-O-phospho-beta-D-ribosyl)acetamidine + L-glutamate + ADP + phosphate + H(+). Its pathway is purine metabolism; IMP biosynthesis via de novo pathway; 5-amino-1-(5-phospho-D-ribosyl)imidazole from N(2)-formyl-N(1)-(5-phospho-D-ribosyl)glycinamide: step 1/2. Functionally, part of the phosphoribosylformylglycinamidine synthase complex involved in the purines biosynthetic pathway. Catalyzes the ATP-dependent conversion of formylglycinamide ribonucleotide (FGAR) and glutamine to yield formylglycinamidine ribonucleotide (FGAM) and glutamate. The FGAM synthase complex is composed of three subunits. PurQ produces an ammonia molecule by converting glutamine to glutamate. PurL transfers the ammonia molecule to FGAR to form FGAM in an ATP-dependent manner. PurS interacts with PurQ and PurL and is thought to assist in the transfer of the ammonia molecule from PurQ to PurL. The chain is Phosphoribosylformylglycinamidine synthase subunit PurL from Cyanothece sp. (strain PCC 7425 / ATCC 29141).